Here is a 576-residue protein sequence, read N- to C-terminus: WD repeat-containing protein 26 (576 aa).

Over residues 1-20 the composition is skewed to polar residues; that stretch reads MQSNGTGQEQNHPANTQNGD. The disordered stretch occupies residues 1 to 46; it reads MQSNGTGQEQNHPANTQNGDANGLQSNAGSASGASGTGSGSLKKKK. Residues 21 to 34 show a composition bias toward low complexity; it reads ANGLQSNAGSASGA. A Phosphoserine modification is found at S49. Residues 51 to 83 form the LisH domain; that stretch reads AEEDVIRLIGQHLHGLGLNQTVDLLMQESGCRL. The CTLH domain occupies 84–143; it reads EHSSATKFRNHVMEGEWDKAENDLNELKALMHSPNAIVRMKFLLLQQKYLEYLEDGKVLE. WD repeat units lie at residues 265–304, 311–350, 356–396, 436–475, 478–520, and 523–563; these read EHCNEVWFCKFSNDGTKLATGSKDTTVIIWQVEPDTHQLK, GHAYGVSYLAWSPDDVYLIACGPDDCSELWLWNVQTGELR, SHED…ESWE, QEDHPIMSFTVSKNGRLALLNVATQGVHLWDLQDRVLVRK, GVTQ…PIVE, and GHTR…DAQE.

As to quaternary structure, forms homooligomers. Identified in the CTLH complex that contains at least MAEA, RMND5A (or alternatively its paralog RMND5B), GID8, WDR26, and RANBP9 and/or RANBP10. Interacts with DDB1-CUL4A/B E3 ligase complexes.

Its subcellular location is the cytoplasm. It is found in the nucleus. It localises to the mitochondrion. Its function is as follows. G-beta-like protein involved in cell signal transduction. Acts as a negative regulator in MAPK signaling pathway. Functions as a scaffolding protein to promote G beta:gamma-mediated PLCB2 plasma membrane translocation and subsequent activation in leukocytes. Core component of the CTLH E3 ubiquitin-protein ligase complex that mediates ubiquitination and subsequent proteasomal degradation of target proteins. Acts as a negative regulator of the canonical Wnt signaling pathway through preventing ubiquitination of beta-catenin CTNNB1 by the beta-catenin destruction complex, thus negatively regulating CTNNB1 degradation. Serves as a scaffold to coordinate PI3K/AKT pathway-driven cell growth and migration. Protects cells from oxidative stress-induced apoptosis via the down-regulation of AP-1 transcriptional activity as well as by inhibiting cytochrome c release from mitochondria. Also protects cells by promoting hypoxia-mediated autophagy and mitophagy. In Danio rerio (Zebrafish), this protein is WD repeat-containing protein 26 (wdr26).